Reading from the N-terminus, the 868-residue chain is Pro-neuregulin-2, membrane-bound isoform (868 aa).

The disordered stretch occupies residues 1–114 (MRQVCCSALP…AAGGMRRDPA (114 aa)). Positions 1 to 127 (MRQVCCSALP…SMLLFGVSLA (127 aa)) are excised as a propeptide. The segment covering 19–75 (SSYSYSDSSSSSSSNNSSSSTSSRSSSRSSSRSSRGSTTTTSSSENSGSNSGSIFRP) has biased composition (low complexity). 2 N-linked (GlcNAc...) asparagine glycosylation sites follow: Asn-33 and Asn-34. Over residues 76 to 90 (AAPPEPRPQPQPQPR) the composition is skewed to pro residues. Low complexity predominate over residues 91-108 (SPAARRAAARSRAAAAGG). Residues 128–429 (CYSPSLKSVQ…KEAEELYQKR (302 aa)) are Extracellular-facing. N-linked (GlcNAc...) asparagine glycans are attached at residues Asn-163, Asn-294, and Asn-362. One can recognise an Ig-like C2-type domain in the interval 253–348 (PKLKKMKSQT…RGRLHVNSVS (96 aa)). Cystine bridges form between Cys-273–Cys-327, Cys-361–Cys-375, Cys-369–Cys-386, and Cys-388–Cys-397. The EGF-like domain occupies 357-398 (HARKCNETAKSYCVNGGVCYYIEGINQLSCKCPNGFFGQRCL). Residues 430–450 (VLTITGICVALLVVGIVCVVA) traverse the membrane as a helical segment. Topologically, residues 451 to 868 (YCKTKKQRRQ…TRAKQDSGPL (418 aa)) are cytoplasmic. 5 disordered regions span residues 469 to 488 (MCPA…PRLD), 516 to 553 (TFSG…SESL), 671 to 690 (LLRH…DMQR), 720 to 806 (ASPF…DGAL), and 823 to 868 (LRSD…SGPL). Over residues 518 to 530 (SGSHSCSPSHHCS) the composition is skewed to low complexity. The segment covering 538 to 551 (HRHESHTWSLERSE) has biased composition (basic and acidic residues). The span at 766-794 (LNGLAAQRARAARDSLSLSSGSGCGSASA) shows a compositional bias: low complexity.

It belongs to the neuregulin family. Interacts with ERBB3 and ERBB4. In terms of processing, proteolytic cleavage close to the plasma membrane on the external face leads to the release of the soluble growth factor form. Extensive glycosylation precedes the proteolytic cleavage. In terms of tissue distribution, expressed in most parts of the brain, especially the olfactory bulb and cerebellum where it localizes in granule and Purkinje cells. In the hippocampus, found in the granule cells of the dentate gyrus. In the basal forebrain, found in the cholinergic cells. In the hindbrain, weakly detectable in the motor trigeminal nucleus. Not detected in the hypothalamus. Also found in the liver and in the thymus. Not detected in heart, adrenal gland, or testis.

It localises to the cell membrane. It is found in the secreted. Its function is as follows. Direct ligand for ERBB3 and ERBB4 tyrosine kinase receptors. Concomitantly recruits ERBB1 and ERBB2 coreceptors, resulting in ligand-stimulated tyrosine phosphorylation and activation of the ERBB receptors. May also promote the heterodimerization with the EGF receptor. The chain is Pro-neuregulin-2, membrane-bound isoform (Nrg2) from Rattus norvegicus (Rat).